The sequence spans 321 residues: MVIIKPMIVQVHQSGYRLDYILSKLLPQYSRSQIKHWILNKKVVVNNQVSTLPRKKVVYGELIEIKYINNNDICKSEDIVPQNIPLNIIYEDNDILVINKASNMVVHPGIGHYQGTVLNALLYRYPSILKISKQAGIVQRLDKDTTGLMIIAKTVSAYDNLLRSFKLRKVVKEYDAIVYGKFTSNAGVVNQPMRRHFAKRTFMSVHYTGKSAVTYYSVVEEFKAHSRVRINLKTGRTHQIRVHMAYINHPLVGDQKYKGNFSVFDIKKMSDELNNYLLDFNRQALHACTLQLLHPITQVQMKWNAPLPQDILQLIAILKKY.

Residues 16–93 (YRLDYILSKL…IPLNIIYEDN (78 aa)) enclose the S4 RNA-binding domain. The active site involves Asp-142.

The protein belongs to the pseudouridine synthase RluA family.

It is found in the cytoplasm. It catalyses the reaction uridine(1911/1915/1917) in 23S rRNA = pseudouridine(1911/1915/1917) in 23S rRNA. Functionally, responsible for synthesis of pseudouridine from uracil at positions 1911, 1915 and 1917 in 23S ribosomal RNA. The polypeptide is Ribosomal large subunit pseudouridine synthase D (rluD) (Blochmanniella floridana).